The sequence spans 559 residues: Small ribosomal subunit protein bS1 (559 aa).

6 consecutive S1 motif domains span residues Gly-21 to Glu-87, Ser-105 to Arg-171, Gly-192 to Lys-260, Gly-277 to Lys-347, Gly-364 to Lys-434, and Gly-451 to His-520.

This sequence belongs to the bacterial ribosomal protein bS1 family.

Its function is as follows. Binds mRNA; thus facilitating recognition of the initiation point. It is needed to translate mRNA with a short Shine-Dalgarno (SD) purine-rich sequence. This Buchnera aphidicola subsp. Schizaphis graminum (strain Sg) protein is Small ribosomal subunit protein bS1 (rpsA).